The primary structure comprises 101 residues: Interleukin-8 (101 aa).

The first 22 residues, 1 to 22, serve as a signal peptide directing secretion; sequence MTSKLAIALLAAFLLSAALCKA. Arg-27 carries the post-translational modification Citrulline. 2 cysteine pairs are disulfide-bonded: Cys-34–Cys-61 and Cys-36–Cys-77.

It belongs to the intercrine alpha (chemokine CxC) family. Homodimer. In terms of processing, citrullination at Arg-27 prevents proteolysis, and dampens tissue inflammation, it also enhances leukocytosis, possibly through impaired chemokine clearance from the blood circulation.

It localises to the secreted. Chemotactic factor that mediates inflammatory response by attracting neutrophils, basophils, and T-cells to clear pathogens and protect the host from infection. Also plays an important role in neutrophil activation. Released in response to an inflammatory stimulus, exerts its effect by binding to the G-protein-coupled receptors CXCR1 and CXCR2, primarily found in neutrophils, monocytes and endothelial cells. G-protein heterotrimer (alpha, beta, gamma subunits) constitutively binds to CXCR1/CXCR2 receptor and activation by IL8 leads to beta and gamma subunits release from Galpha (GNAI2 in neutrophils) and activation of several downstream signaling pathways including PI3K and MAPK pathways. In Tursiops truncatus (Atlantic bottle-nosed dolphin), this protein is Interleukin-8 (CXCL8).